A 113-amino-acid polypeptide reads, in one-letter code: Large ribosomal subunit protein bL19 (113 aa).

The protein belongs to the bacterial ribosomal protein bL19 family.

Functionally, this protein is located at the 30S-50S ribosomal subunit interface and may play a role in the structure and function of the aminoacyl-tRNA binding site. This is Large ribosomal subunit protein bL19 from Mycobacterium avium (strain 104).